The following is a 458-amino-acid chain: Alpha-2C adrenergic receptor (458 aa).

The Extracellular segment spans residues 1–51 (MASPALAAALAAAAAEGPNGSDAGEWGSGGGANASGTDWGPPPGQYSAGAV). N-linked (GlcNAc...) asparagine glycosylation is found at Asn19 and Asn33. The chain crosses the membrane as a helical span at residues 52 to 76 (AGLAAVVGFLIVFTVVGNVLVVIAV). Residues 77–88 (LTSRALRAPQNL) are Cytoplasmic-facing. Residues 89-114 (FLVSLASADILVATLVMPFSLANELM) traverse the membrane as a helical segment. Over 115 to 124 (AYWYFGQVWC) the chain is Extracellular. An intrachain disulfide couples Cys124 to Cys202. The chain crosses the membrane as a helical span at residues 125 to 147 (GVYLALDVLFCTSSIVHLCAISL). The Cytoplasmic segment spans residues 148–168 (DRYWSVTQAVEYNLKRTPRRV). A helical transmembrane segment spans residues 169–191 (KATIVAVWLISAVISFPPLVSFY). Residues 192 to 207 (RRPDGAAYPQCGLNDE) are Extracellular-facing. A helical membrane pass occupies residues 208-231 (TWYILSSCIGSFFAPCLIMGLVYA). Topologically, residues 232-379 (RIYRVAKLRT…QAREKRFTFV (148 aa)) are cytoplasmic. Residues 245-343 (SEKRGPAGPD…SPGPGGRLSR (99 aa)) form a disordered region. Residues 291–303 (RRRRRGALRRGGR) show a composition bias toward basic residues. The chain crosses the membrane as a helical span at residues 380-403 (LAVVMGVFVLCWFPFFFSYSLYGI). The Extracellular portion of the chain corresponds to 404 to 416 (CREACQLPEPLFK). A helical membrane pass occupies residues 417-437 (FFFWIGYCNSSLNPVIYTVFN). At 438–458 (QDFRRSFKHILFRRRRRGFRQ) the chain is on the cytoplasmic side.

The protein belongs to the G-protein coupled receptor 1 family. Adrenergic receptor subfamily. ADRA2C sub-subfamily.

It localises to the cell membrane. Functionally, alpha-2 adrenergic receptors mediate the catecholamine-induced inhibition of adenylate cyclase through the action of G proteins. This is Alpha-2C adrenergic receptor (Adra2c) from Rattus norvegicus (Rat).